Reading from the N-terminus, the 379-residue chain is Inactive 2'-5'-oligoadenylate synthase 1B (379 aa).

Over 1–355 (MEQELRSIPA…VPTEVDIPSQ (355 aa)) the chain is Cytoplasmic. The helical; Anchor for type IV membrane protein transmembrane segment at 356–374 (NYFFHIICLIFWLLLRLIF) threads the bilayer. The Extracellular portion of the chain corresponds to 375–379 (GKHSV).

This sequence belongs to the 2-5A synthase family. In terms of assembly, interacts with OSBPL1A and ABCF3. In terms of tissue distribution, highly expressed in the brain, liver, spleen and heart.

The protein localises to the endoplasmic reticulum membrane. Its function is as follows. Does not have 2'-5'-OAS activity, but can bind double-stranded RNA. Displays antiviral activity against viruses via an alternative antiviral pathway independent of RNase L. The polypeptide is Inactive 2'-5'-oligoadenylate synthase 1B (Oas1b) (Rattus norvegicus (Rat)).